Consider the following 188-residue polypeptide: PRA1 family protein 3 (188 aa).

Met-1 is modified (N-acetylmethionine). Topologically, residues 1–35 (MDVNIAPLRAWDDFFPGSDRFARPDFRDISKWNNR) are cytoplasmic. 2 consecutive transmembrane segments (helical) span residues 36–56 (VVSN…MMIS) and 57–77 (IVGF…VLVF). Over 78–93 (TGFVWAAHNKDVLRRM) the chain is Cytoplasmic. 2 helical membrane passes run 94 to 114 (KKRY…FLIS) and 115 to 135 (MFGG…LMFI). The interval 103–117 (MVVMLASYFLISMFG) is required for homodimer formation and heterodimer formation with ARL6IP1. Over 136–188 (HASLRLRNLKNKLENKMEGIGLKRTPMGIVLDALEQQEEGINRLTDYISKVKE) the chain is Cytoplasmic. Residues 136 to 188 (HASLRLRNLKNKLENKMEGIGLKRTPMGIVLDALEQQEEGINRLTDYISKVKE) are targeting to endoplasmic reticulum membrane.

The protein belongs to the PRA1 family. Homodimer. Heterodimer with ARL6IP1. Forms multimers. Interacts with ARL6. Interacts with prenylated RAB1A and RAB3A. Interacts with SLC1A1/EAAC1. Interacts with RTN2 (via first transmembrane domain). Does not interact with VAMP1, VAMP2 or VAMP3.

The protein localises to the endoplasmic reticulum membrane. Its subcellular location is the cell membrane. The protein resides in the cytoplasm. It localises to the cytoskeleton. In terms of biological role, regulates intracellular concentrations of taurine and glutamate. Negatively modulates SLC1A1/EAAC1 glutamate transport activity by decreasing its affinity for glutamate in a PKC activity-dependent manner. Plays a role in the retention of SLC1A1/EAAC1 in the endoplasmic reticulum. The polypeptide is PRA1 family protein 3 (ARL6IP5) (Homo sapiens (Human)).